The chain runs to 255 residues: 1-(5-phosphoribosyl)-5-[(5-phosphoribosylamino)methylideneamino] imidazole-4-carboxamide isomerase (255 aa).

Residue D8 is the Proton acceptor of the active site. Catalysis depends on D129, which acts as the Proton donor.

It belongs to the HisA/HisF family.

Its subcellular location is the cytoplasm. The enzyme catalyses 1-(5-phospho-beta-D-ribosyl)-5-[(5-phospho-beta-D-ribosylamino)methylideneamino]imidazole-4-carboxamide = 5-[(5-phospho-1-deoxy-D-ribulos-1-ylimino)methylamino]-1-(5-phospho-beta-D-ribosyl)imidazole-4-carboxamide. The protein operates within amino-acid biosynthesis; L-histidine biosynthesis; L-histidine from 5-phospho-alpha-D-ribose 1-diphosphate: step 4/9. The polypeptide is 1-(5-phosphoribosyl)-5-[(5-phosphoribosylamino)methylideneamino] imidazole-4-carboxamide isomerase (Prochlorococcus marinus (strain MIT 9303)).